The sequence spans 205 residues: CASP-like protein 0U1 (205 aa).

Residues 1 to 38 (MDDAPGASDEAREPLLKRVGASVEGTSLMNHRLMKNPK) are Cytoplasmic-facing. Residues 39–57 (FRALLVESLMALTTFSFMA) form a helical membrane-spanning segment. Residues 58–89 (KQTEGLAGPELSTLNDCGEAGCGFTKFYQFKG) lie on the Extracellular side of the membrane. A helical transmembrane segment spans residues 90-110 (VVGVYAGFWAYTVILIAMYVI). Over 111-124 (RKAPPPGTEFASYA) the chain is Cytoplasmic. A helical transmembrane segment spans residues 125–145 (LFTAAMATFVVMSITECASVV). Residues 146 to 159 (LSSDYYVCKNADYS) are Extracellular-facing. The helical transmembrane segment at 160–180 (LVSLIFAAATIVLNCLTCAFA) threads the bilayer. Residues 181 to 205 (WRQWGELKFVGLPKTLSALTETYPG) lie on the Cytoplasmic side of the membrane.

It belongs to the Casparian strip membrane proteins (CASP) family. Homodimer and heterodimers.

The protein resides in the cell membrane. This Ostreococcus lucimarinus (strain CCE9901) protein is CASP-like protein 0U1.